A 799-amino-acid polypeptide reads, in one-letter code: Elongation factor G, mitochondrial (799 aa).

A mitochondrion-targeting transit peptide spans 1-33 (MRSPSLARLQTRAVFGLTRSARFQPQTLLRQRC). The region spanning 97 to 384 (DKCRNIGIAA…GVIDYLPNPA (288 aa)) is the tr-type G domain. Residues 106–113 (AHIDSGKT), 182–186 (DTPGH), and 236–239 (NKMD) contribute to the GTP site.

This sequence belongs to the TRAFAC class translation factor GTPase superfamily. Classic translation factor GTPase family. EF-G/EF-2 subfamily.

Its subcellular location is the mitochondrion. The protein operates within protein biosynthesis; polypeptide chain elongation. Functionally, mitochondrial GTPase that catalyzes the GTP-dependent ribosomal translocation step during translation elongation. During this step, the ribosome changes from the pre-translocational (PRE) to the post-translocational (POST) state as the newly formed A-site-bound peptidyl-tRNA and P-site-bound deacylated tRNA move to the P and E sites, respectively. Catalyzes the coordinated movement of the two tRNA molecules, the mRNA and conformational changes in the ribosome. In Penicillium rubens (strain ATCC 28089 / DSM 1075 / NRRL 1951 / Wisconsin 54-1255) (Penicillium chrysogenum), this protein is Elongation factor G, mitochondrial (mef1).